The chain runs to 485 residues: Glutamate--tRNA ligase (485 aa).

Residues 11–21 (PSPTGHLHIGN) carry the 'HIGH' region motif. Residues 252-256 (KLSKR) carry the 'KMSKS' region motif. K255 serves as a coordination point for ATP.

It belongs to the class-I aminoacyl-tRNA synthetase family. Glutamate--tRNA ligase type 1 subfamily. As to quaternary structure, monomer.

The protein localises to the cytoplasm. The enzyme catalyses tRNA(Glu) + L-glutamate + ATP = L-glutamyl-tRNA(Glu) + AMP + diphosphate. Catalyzes the attachment of glutamate to tRNA(Glu) in a two-step reaction: glutamate is first activated by ATP to form Glu-AMP and then transferred to the acceptor end of tRNA(Glu). In Bacillus thuringiensis (strain Al Hakam), this protein is Glutamate--tRNA ligase.